Here is a 59-residue protein sequence, read N- to C-terminus: DNA-directed RNA polymerase subunit Rpo6 (59 aa).

This sequence belongs to the archaeal Rpo6/eukaryotic RPB6 RNA polymerase subunit family. As to quaternary structure, part of the RNA polymerase complex.

It is found in the cytoplasm. The enzyme catalyses RNA(n) + a ribonucleoside 5'-triphosphate = RNA(n+1) + diphosphate. DNA-dependent RNA polymerase (RNAP) catalyzes the transcription of DNA into RNA using the four ribonucleoside triphosphates as substrates. The chain is DNA-directed RNA polymerase subunit Rpo6 from Halorubrum lacusprofundi (strain ATCC 49239 / DSM 5036 / JCM 8891 / ACAM 34).